We begin with the raw amino-acid sequence, 585 residues long: A-type ATP synthase subunit A (585 aa).

The interval 192–211 is disordered; sequence MRQEWPVREPRPTVEKKTPR. A compositionally biased stretch (basic and acidic residues) spans 196–211; sequence WPVREPRPTVEKKTPR. 237–244 contributes to the ATP binding site; the sequence is GPFGSGKT.

The protein belongs to the ATPase alpha/beta chains family. In terms of assembly, has multiple subunits with at least A(3), B(3), C, D, E, F, H, I and proteolipid K(x).

It localises to the cell membrane. It catalyses the reaction ATP + H2O + 4 H(+)(in) = ADP + phosphate + 5 H(+)(out). Functionally, component of the A-type ATP synthase that produces ATP from ADP in the presence of a proton gradient across the membrane. The A chain is the catalytic subunit. This chain is A-type ATP synthase subunit A, found in Haloquadratum walsbyi (strain DSM 16790 / HBSQ001).